Here is a 276-residue protein sequence, read N- to C-terminus: MAPLKFCANISWLFTELPEFPQRMRAAASAGFRAVEAAWLYNTDLKELKTAKEETGLEFVLINTPPGDASAGDLGLAAVPGREQEFRQGLDLAVQYAKALDCTRIHLMAGRVPAGSERCALALQMEDTFVHNLKHAAGVLDKEGLLGLIEPINSRITDPRYFLHSPHQAAEILQRVDHPSIKMQMDIFHWQIMDGNLTHNIRRYLPMTGHIQIAQVPDRHEPDSPGELNFSFIFRLLEELDYQGFIGCEYKPQGSTEAGLEWLRKYWRSRNGGERD.

Residues Glu-150 and Glu-249 each act as proton donor/acceptor in the active site.

It belongs to the hyi family.

The enzyme catalyses 3-hydroxypyruvate = 2-hydroxy-3-oxopropanoate. Catalyzes the reversible isomerization between hydroxypyruvate and 2-hydroxy-3-oxopropanoate (also termed tartronate semialdehyde). The protein is Putative hydroxypyruvate isomerase (hyi) of Danio rerio (Zebrafish).